The chain runs to 109 residues: UPF0060 membrane protein RC1_3291 (109 aa).

Transmembrane regions (helical) follow at residues 4 to 24 (IATYLLAAVAEIGGCFAFWAW), 31 to 51 (PLWLIPGMASLALFAWALTRI), 59 to 79 (AYAAYGGIYILTSLVWMWLVE), and 88 to 108 (TLGTVLCVSGALVIIFGPRGG).

It belongs to the UPF0060 family.

It is found in the cell inner membrane. The polypeptide is UPF0060 membrane protein RC1_3291 (Rhodospirillum centenum (strain ATCC 51521 / SW)).